A 317-amino-acid polypeptide reads, in one-letter code: Melanocyte-stimulating hormone receptor (317 aa).

Residues 1 to 26 (MPVQGSPRSLLGAVNSTPTATPHLRP) are disordered. Residues 1–37 (MPVQGSPRSLLGAVNSTPTATPHLRPAANQTGPQCLE) are Extracellular-facing. Residue Asn-29 is glycosylated (N-linked (GlcNAc...) asparagine). The chain crosses the membrane as a helical span at residues 38–63 (VSIPDGLFLCLGLVSLVENTLVVAAI). Over 64 to 72 (AKNRNLHSP) the chain is Cytoplasmic. Residues 73–93 (MYCFVCCLALSDLLVSVSSVL) traverse the membrane as a helical segment. Residues 94-118 (ETAVLLLLGAGALAAQATVVQLLGN) are Extracellular-facing. Residues 119–140 (VIDVLLCSSMVSSLFFLGAIAM) form a helical membrane-spanning segment. The Cytoplasmic portion of the chain corresponds to 141–163 (DRYISIFYALRYHSIVTLARARR). Residues 164 to 183 (AIAAIWAASMLSSTLFIAYC) traverse the membrane as a helical segment. The Extracellular segment spans residues 184 to 191 (DHTAALLC). Residues 192–211 (LVVFFLAMLVLMAVLYVHML) traverse the membrane as a helical segment. Residues 212-240 (TQACQHAQGIARLHKRQRPVQQGWGLKGA) lie on the Cytoplasmic side of the membrane. A helical transmembrane segment spans residues 241-266 (ATLAILLGVFFLCWGPFFLHLTLIAV). At 267 to 279 (CPQHPTCSCIFKN) the chain is on the extracellular side. Residues 280–300 (FRLFLALIVCNAIVDPLIYAF) traverse the membrane as a helical segment. At 301–317 (RSQELCKTLKELLLFSW) the chain is on the cytoplasmic side.

This sequence belongs to the G-protein coupled receptor 1 family. As to quaternary structure, interacts with MGRN1, but does not undergo MGRN1-mediated ubiquitination; this interaction competes with GNAS-binding and thus inhibits agonist-induced cAMP production. Interacts with OPN3; the interaction results in a decrease in MC1R-mediated cAMP signaling and ultimately a decrease in melanin production in melanocytes.

It is found in the cell membrane. In terms of biological role, receptor for MSH (alpha, beta and gamma) and ACTH. The activity of this receptor is mediated by G proteins which activate adenylate cyclase. Mediates melanogenesis, the production of eumelanin (black/brown) and phaeomelanin (red/yellow), via regulation of cAMP signaling in melanocytes. The polypeptide is Melanocyte-stimulating hormone receptor (MC1R) (Hapalemur griseus (Gray gentle lemur)).